Reading from the N-terminus, the 470-residue chain is tRNA(Ile)-lysidine synthase (470 aa).

An ATP-binding site is contributed by 32–37 (SGGVDS).

Belongs to the tRNA(Ile)-lysidine synthase family.

Its subcellular location is the cytoplasm. It carries out the reaction cytidine(34) in tRNA(Ile2) + L-lysine + ATP = lysidine(34) in tRNA(Ile2) + AMP + diphosphate + H(+). Functionally, ligates lysine onto the cytidine present at position 34 of the AUA codon-specific tRNA(Ile) that contains the anticodon CAU, in an ATP-dependent manner. Cytidine is converted to lysidine, thus changing the amino acid specificity of the tRNA from methionine to isoleucine. The protein is tRNA(Ile)-lysidine synthase of Shewanella woodyi (strain ATCC 51908 / MS32).